Reading from the N-terminus, the 429-residue chain is U3 small nucleolar RNA-associated protein 18 homolog (429 aa).

WD repeat units follow at residues 117–156 (RYTR…KKDR), 295–336 (TDDG…NSTN), 345–386 (NLVT…TFKN), and 392–428 (GKVT…HFTD).

Belongs to the WD repeat UTP18 family.

Its subcellular location is the nucleus. It is found in the nucleolus. Functionally, involved in nucleolar processing of pre-18S ribosomal RNA. This is U3 small nucleolar RNA-associated protein 18 homolog from Caenorhabditis elegans.